The sequence spans 94 residues: Small ribosomal subunit protein uS19 (94 aa).

The protein belongs to the universal ribosomal protein uS19 family.

Its function is as follows. Protein S19 forms a complex with S13 that binds strongly to the 16S ribosomal RNA. This chain is Small ribosomal subunit protein uS19, found in Clostridium novyi (strain NT).